The following is a 290-amino-acid chain: ATP synthase gamma chain (290 aa).

Belongs to the ATPase gamma chain family. In terms of assembly, F-type ATPases have 2 components, CF(1) - the catalytic core - and CF(0) - the membrane proton channel. CF(1) has five subunits: alpha(3), beta(3), gamma(1), delta(1), epsilon(1). CF(0) has three main subunits: a, b and c.

The protein resides in the cell membrane. Its function is as follows. Produces ATP from ADP in the presence of a proton gradient across the membrane. The gamma chain is believed to be important in regulating ATPase activity and the flow of protons through the CF(0) complex. The chain is ATP synthase gamma chain from Wolbachia pipientis subsp. Culex pipiens (strain wPip).